The sequence spans 91 residues: Small ribosomal subunit protein bS18 (91 aa).

This sequence belongs to the bacterial ribosomal protein bS18 family. In terms of assembly, part of the 30S ribosomal subunit. Forms a tight heterodimer with protein bS6.

Its function is as follows. Binds as a heterodimer with protein bS6 to the central domain of the 16S rRNA, where it helps stabilize the platform of the 30S subunit. This chain is Small ribosomal subunit protein bS18, found in Burkholderia multivorans (strain ATCC 17616 / 249).